The following is a 333-amino-acid chain: Testin-2 (333 aa).

Residues 1 to 17 (MIAVLFLAILCLEVDST) form the signal peptide. 3 cysteine pairs are disulfide-bonded: cysteine 135–cysteine 178, cysteine 169–cysteine 211, and cysteine 269–cysteine 322. N-linked (GlcNAc...) asparagine glycosylation is present at asparagine 173. Active-site residues include histidine 276 and asparagine 300.

This sequence belongs to the peptidase C1 family. In terms of tissue distribution, sertoli cells.

The protein localises to the secreted. The protein is Testin-2 (Testin) of Rattus norvegicus (Rat).